We begin with the raw amino-acid sequence, 285 residues long: Sulfotransferase 2A1 (285 aa).

Residues Lys-44, Ser-45, Gly-46, Thr-47, Asn-48, and Trp-49 each coordinate 3'-phosphoadenylyl sulfate. His-99 functions as the Proton acceptor in the catalytic mechanism. The 3'-phosphoadenylyl sulfate site is built by Arg-121, Ser-129, Tyr-184, Ser-218, Met-223, Arg-247, Lys-248, and Gly-249. Phosphoserine is present on Ser-251.

The protein belongs to the sulfotransferase 1 family. Homodimer. As to expression, predominanly expressed in liver. Detected also in adrenal gland and in jejunum.

It is found in the cytoplasm. Its subcellular location is the cytosol. The enzyme catalyses an alcohol + 3'-phosphoadenylyl sulfate = an alkyl sulfate + adenosine 3',5'-bisphosphate + H(+). The catalysed reaction is 3beta-hydroxyandrost-5-en-17-one + 3'-phosphoadenylyl sulfate = dehydroepiandrosterone 3-sulfate + adenosine 3',5'-bisphosphate + H(+). It carries out the reaction taurolithocholate + 3'-phosphoadenylyl sulfate = taurolithocholate 3-sulfate + adenosine 3',5'-bisphosphate + H(+). It catalyses the reaction lithocholate + 3'-phosphoadenylyl sulfate = lithocholate sulfate + adenosine 3',5'-bisphosphate + H(+). The enzyme catalyses (24S)-hydroxycholesterol + 3'-phosphoadenylyl sulfate = (24S)-hydroxycholesterol 24-sulfate + adenosine 3',5'-bisphosphate + H(+). The catalysed reaction is (24S)-hydroxycholesterol + 3'-phosphoadenylyl sulfate = (24S)-hydroxycholesterol 3-sulfate + adenosine 3',5'-bisphosphate + H(+). It carries out the reaction (24S)-hydroxycholesterol 24-sulfate + 3'-phosphoadenylyl sulfate = (24S)-hydroxycholesterol 3,24-disulfate + adenosine 3',5'-bisphosphate + H(+). It catalyses the reaction pregnenolone + 3'-phosphoadenylyl sulfate = pregnenolone sulfate + adenosine 3',5'-bisphosphate + H(+). The enzyme catalyses androsterone + 3'-phosphoadenylyl sulfate = androsterone 3alpha-sulfate + adenosine 3',5'-bisphosphate + H(+). In terms of biological role, sulfotransferase that utilizes 3'-phospho-5'-adenylyl sulfate (PAPS) as sulfonate donor to catalyze the sulfonation of steroids and bile acids in the liver and adrenal glands. Mediates the sulfation of a wide range of steroids and sterols, including pregnenolone, androsterone, DHEA, bile acids, cholesterol and as well many xenobiotics that contain alcohol and phenol functional groups. Sulfonation increases the water solubility of most compounds, and therefore their renal excretion, but it can also result in bioactivation to form active metabolites. Plays an important role in maintening steroid and lipid homeostasis. Plays a key role in bile acid metabolism. In addition, catalyzes the metabolic activation of potent carcinogenic polycyclic arylmethanols. The polypeptide is Sulfotransferase 2A1 (SULT2A1) (Macaca fascicularis (Crab-eating macaque)).